We begin with the raw amino-acid sequence, 427 residues long: Glutamate-1-semialdehyde 2,1-aminomutase (427 aa).

K265 bears the N6-(pyridoxal phosphate)lysine mark.

Belongs to the class-III pyridoxal-phosphate-dependent aminotransferase family. HemL subfamily. In terms of assembly, homodimer. Pyridoxal 5'-phosphate is required as a cofactor.

The protein resides in the cytoplasm. It catalyses the reaction (S)-4-amino-5-oxopentanoate = 5-aminolevulinate. It functions in the pathway porphyrin-containing compound metabolism; protoporphyrin-IX biosynthesis; 5-aminolevulinate from L-glutamyl-tRNA(Glu): step 2/2. The protein is Glutamate-1-semialdehyde 2,1-aminomutase of Burkholderia ambifaria (strain ATCC BAA-244 / DSM 16087 / CCUG 44356 / LMG 19182 / AMMD) (Burkholderia cepacia (strain AMMD)).